We begin with the raw amino-acid sequence, 561 residues long: 2-methylisocitrate lyase, mitochondrial (561 aa).

Residues 154-177 (KAQSMHDRKQWDTRRKMSPDERSK) form a disordered region. A compositionally biased stretch (basic and acidic residues) spans 157-177 (SMHDRKQWDTRRKMSPDERSK). Residue Cys228 is part of the active site.

The protein belongs to the isocitrate lyase/PEP mutase superfamily. Isocitrate lyase family. The cofactor is Mg(2+).

The protein resides in the mitochondrion matrix. It catalyses the reaction (2S,3R)-3-hydroxybutane-1,2,3-tricarboxylate = pyruvate + succinate. The protein operates within organic acid metabolism; propanoate degradation. In terms of biological role, component of the methylcitrate cycle that catalyzes the formation of pyruvate and succinate from 2-methylisocitrate during the metabolism of endogenous propionyl-CoA. Plays an important role for growth and development, but also in antagonism, root colonization and induction of defense responses in plants. In Hypocrea atroviridis (strain ATCC 20476 / IMI 206040) (Trichoderma atroviride), this protein is 2-methylisocitrate lyase, mitochondrial.